We begin with the raw amino-acid sequence, 287 residues long: Nucleotide-binding protein Hhal_2130 (287 aa).

11-18 (GLSGSGKS) provides a ligand contact to ATP. GTP is bound at residue 63-66 (DARN).

It belongs to the RapZ-like family.

In terms of biological role, displays ATPase and GTPase activities. The protein is Nucleotide-binding protein Hhal_2130 of Halorhodospira halophila (strain DSM 244 / SL1) (Ectothiorhodospira halophila (strain DSM 244 / SL1)).